Here is a 491-residue protein sequence, read N- to C-terminus: MESSAKRKMDPDNPDEGPSSKVPRPETPVTKATTFLQTMLRKEVNSQLSLGDPLFPELAEESLKTFERVTEDCNENPEKDVLAELVKQIKVRVDMVRHRIKEHMLKKYTQTEEKFTGAFNMMGGCLQNALDILDKVHEPFEEMKCIGLTMQSMYENYIVPEDKREMWMACIKELHDVSKGAANKLGGALQAKARAKKDELRRKMMYMCYRNIEFFTKNSAFPKTTNGCSQAMAALQNLPQCSPDEIMAYAQKIFKILDEERDKVLTHIDHIFMDILTTCVETMCNEYKVTSDACMMTMYGGISLLSEFCRVLSCYVLEETSVMLAKRPLITKPEVISVMKRRIEEICMKVFAQYILGADPLRVCSPSVDDLRAIAEESDEEEAIVAYTLATRGASSSDSLVSPPESPVPATIPLSSVIVAENSDQEESEQSDEEEEEGAQEEREDTVSVKSEPVSEIEEVAPEEEEDGAEEPTASGGKSTHPMVTRSKADQ.

Residues 1-11 (MESSAKRKMDP) are compositionally biased toward basic and acidic residues. Residues 1 to 24 (MESSAKRKMDPDNPDEGPSSKVPR) form a nuclear localization signal region. Residues 1 to 30 (MESSAKRKMDPDNPDEGPSSKVPRPETPVT) are disordered. Residues 132–346 (ILDKVHEPFE…SVMKRRIEEI (215 aa)) form an interaction with host PML, interference with PML sumoylation and disruption of PML-associated nuclear bodies region. The tract at residues 373-445 (AIAEESDEEE…EEGAQEERED (73 aa)) is interaction with host STAT2. The modulation of STAT3/STAT1 signaling stretch occupies residues 410–420 (ATIPLSSVIVA). The tract at residues 410-445 (ATIPLSSVIVAENSDQEESEQSDEEEEEGAQEERED) is interaction with host STAT3. The acidic stretch occupies residues 421–472 (ENSDQEESEQSDEEEEEGAQEEREDTVSVKSEPVSEIEEVAPEEEEDGAEEP). Residues 421–491 (ENSDQEESEQ…PMVTRSKADQ (71 aa)) are disordered. The span at 423-444 (SDQEESEQSDEEEEEGAQEERE) shows a compositional bias: acidic residues. Residues 449–452 (VKSE) form an interaction with host SUMO1 region. K450 participates in a covalent cross-link: Glycyl lysine isopeptide (Lys-Gly) (interchain with G-Cter in SUMO). Over residues 455–470 (SEIEEVAPEEEEDGAE) the composition is skewed to acidic residues. Positions 475–491 (SGGKSTHPMVTRSKADQ) are chromosome-tethering domain (CTD), binding to histones.

The protein belongs to the HHV-5 IE1 protein family. As to quaternary structure, forms homodimers. Interacts with human p53/TP53; this interaction inhibits p53/TP53-dependent transactivation activity. Interacts with host STAT1. Interacts with host STAT2; this interaction promotes viral growth and counteracts the antiviral interferon response. May also interact with the host STAT1-STAT2 heterodimer. Interacts with host STAT3; this interaction leads to STAT3 nuclear accumulation and disruption of IL6-induced STAT3 phosphorylation. Interacts with host PML; this interaction inhibits host PML de novo sumoylation and probably inhibits PML regulation of type I and type II interferon-induced gene expression. Interacts with host DAXX. Interacts with host SP100. Interacts with host E2F1. Interacts with host RB1. Interacts with host HDAC1; this interaction inhibits histone deacetylation and promotes viral transcription. Interacts with host HDAC2; this interaction inhibits histone deacetylation and promotes viral transcription. Interacts with host HDAC3; this interaction inhibits histone deacetylation and promotes viral transcription. Interacts with host PLSCR1; this interaction inhibits IE1 transactivating activity. Sumoylated by host PML/nuclear domain 10. Sumoylation abolishes the interaction with host STAT2 and thus the IE1-mediated repression of interferon-stimulated genes.

Its subcellular location is the host nucleus. In terms of biological role, plays an important role in transactivating viral early genes as well as activating its own promoter, probably by altering the viral chromatin structure. Expression of IE1 and IE2 proteins is critical for the establishment of lytic infection and reactivation from viral latency. Disrupts PML-associated ND10 nuclear bodies by interfering with host PML and SP100 sumoylation thereby altering the regulation of type I and type II interferon-induced gene expression. Promotes efficient viral growth by interacting with and directing host SP100 to degradation, leading to enhanced acetylation level of histones. In addition, functions in counteracting the host innate antiviral response. Inhibits the type I interferon pathway by directly interacting with and sequestrating host STAT2. Also targets type II interferon pathway by repressing IL6- and STAT3 target genes. Repression of STAT3 genes is due to STAT3 nuclear accumulation and disruption of IL6-induced STAT3 phosphorylation by IE1. This repression is followed by phosphorylation and activation of STAT1. Inhibits host ISG transcription by sequestering host ISGF3 in a PML- and STAT2- binding dependent manner. Alters host cell cycle progression, probably through its interaction with host E2F1 or RB1 that overcomes the RB1-mediated repression of E2F-responsive promoters. May act as a E3 ubiquitin ligase targeting several host proteins including HES1 and SP100A for ubiquitination and subsequent proteasomal degradation. Impairs the radial migration of immature neurons by downregulating Gap junction alpha-1 protein/GJA1 also via ubiquitination and degradation. In Human cytomegalovirus (strain Towne) (HHV-5), this protein is Immediate early protein IE1 (UL123).